A 1057-amino-acid polypeptide reads, in one-letter code: mRNA export factor elf1 (1057 aa).

2 consecutive ABC transporter domains span residues 440 to 659 and 692 to 1019; these read IEEE…VKPE and LKMT…KKKL. Residues 477–484 and 726–733 each bind ATP; these read GHNGCGKS and GPNGAGKS. Residue Ser-733 is modified to Phosphoserine. One can recognise a Chromo domain in the interval 820-869; that stretch reads RRVEALIGRQKLKKSFQYEIKWFGKPHKYNTWVSREILLENGFQKFVQAF. Basic and acidic residues predominate over residues 1020-1036; the sequence is TRNEIKAKERRAREREL. Residues 1020–1057 form a disordered region; it reads TRNEIKAKERRARERELAWLQSPKGTEKPKSFFSDDEE. 2 positions are modified to phosphoserine: Ser-1041 and Ser-1053.

It belongs to the ABC transporter superfamily. ABCF family. EF3 subfamily.

It is found in the cytoplasm. It localises to the nucleus. In terms of biological role, has a direct role in the mRNA export process. Appears to act within the rae1 mediated mRNA export pathway. The chain is mRNA export factor elf1 (elf1) from Schizosaccharomyces pombe (strain 972 / ATCC 24843) (Fission yeast).